A 200-amino-acid polypeptide reads, in one-letter code: Mediator of RNA polymerase II transcription subunit 8 (200 aa).

Belongs to the Mediator complex subunit 8 family. Component of the Mediator complex.

The protein localises to the nucleus. Its function is as follows. Component of the Mediator complex, a coactivator involved in the regulated transcription of nearly all RNA polymerase II-dependent genes. Mediator functions as a bridge to convey information from gene-specific regulatory proteins to the basal RNA polymerase II transcription machinery. Mediator is recruited to promoters by direct interactions with regulatory proteins and serves as a scaffold for the assembly of a functional preinitiation complex with RNA polymerase II and the general transcription factors. The sequence is that of Mediator of RNA polymerase II transcription subunit 8 (med8) from Schizosaccharomyces pombe (strain 972 / ATCC 24843) (Fission yeast).